A 333-amino-acid polypeptide reads, in one-letter code: Probable tRNA pseudouridine synthase B (333 aa).

Aspartate 71 acts as the Nucleophile in catalysis. The 76-residue stretch at 238-313 (LPKIWVRDSA…LVARTDRVVM (76 aa)) folds into the PUA domain.

Belongs to the pseudouridine synthase TruB family. Type 2 subfamily.

The enzyme catalyses uridine(55) in tRNA = pseudouridine(55) in tRNA. Its function is as follows. Could be responsible for synthesis of pseudouridine from uracil-55 in the psi GC loop of transfer RNAs. The polypeptide is Probable tRNA pseudouridine synthase B (Pyrobaculum calidifontis (strain DSM 21063 / JCM 11548 / VA1)).